The primary structure comprises 33 residues: GLWSTIKQKGKEAAIAAAKAAGKAALNAASEAL.

Position 33 is a leucine amide (leucine 33).

In terms of tissue distribution, expressed by the skin glands.

It is found in the secreted. Its function is as follows. Has antiparasitic activity against trypomastigote form of T.cruzi (IC(50)=0.25 uM) in vitro but not against L.infantum. Probably acts by permeabilizing cell membranes. In vitro, shows no cytotoxicity against macrophages. Has antibacterial activity. The polypeptide is Dermaseptin-4 (Pithecopus nordestinus (Northeastern Brazilian leaf frog)).